The following is a 329-amino-acid chain: MELELDLLTGLQLLSEYCPRVTPNAPPRRASVAVIIAFKESQDFSNPKWPQCIPITSVPYVLLIQRSFRDTDRWSGHMALPGGTRSLTDKSDIQTAHRETLEEVGIDLRKEHAHFVGALDERVITSNWGQFPLLLLSSFVFILPYMPSLRLQESEVFSAQWYPLADLLLPECQTRIQIDSSRALKKTYPRFIKTLFHLAVGNLMYSAIRLEFDPSSATYSLPPYQRPFLRGITHSIFVDLFIFLSPSSARHCLCWSLPYFQHYDLRFIASFFTQFYRLRLHQVYPRGNWVFTCLNGYYPYLKLTLLVGFLFRLFLVYLLFLIISAYYKS.

One can recognise a Nudix hydrolase domain in the interval 27-185; it reads PRRASVAVII…IQIDSSRALK (159 aa). A run of 3 helical transmembrane segments spans residues 123–143, 227–247, and 303–323; these read VITSNWGQFPLLLLSSFVFIL, PFLRGITHSIFVDLFIFLSPS, and LTLLVGFLFRLFLVYLLFLII.

It is found in the membrane. This is an uncharacterized protein from Schizosaccharomyces pombe (strain 972 / ATCC 24843) (Fission yeast).